The sequence spans 295 residues: Ethanolamine ammonia-lyase small subunit (295 aa).

Positions 209 and 230 each coordinate adenosylcob(III)alamin.

This sequence belongs to the EutC family. In terms of assembly, the basic unit is a heterodimer which dimerizes to form tetramers. The heterotetramers trimerize; 6 large subunits form a core ring with 6 small subunits projecting outwards. Adenosylcob(III)alamin serves as cofactor.

The protein resides in the bacterial microcompartment. The catalysed reaction is ethanolamine = acetaldehyde + NH4(+). It functions in the pathway amine and polyamine degradation; ethanolamine degradation. Catalyzes the deamination of various vicinal amino-alcohols to oxo compounds. Allows this organism to utilize ethanolamine as the sole source of nitrogen and carbon in the presence of external vitamin B12. The polypeptide is Ethanolamine ammonia-lyase small subunit (Clostridium perfringens (strain ATCC 13124 / DSM 756 / JCM 1290 / NCIMB 6125 / NCTC 8237 / Type A)).